Consider the following 291-residue polypeptide: ATP synthase gamma chain (291 aa).

The protein belongs to the ATPase gamma chain family. In terms of assembly, F-type ATPases have 2 components, CF(1) - the catalytic core - and CF(0) - the membrane proton channel. CF(1) has five subunits: alpha(3), beta(3), gamma(1), delta(1), epsilon(1). CF(0) has three main subunits: a, b and c.

Its subcellular location is the cell inner membrane. Its function is as follows. Produces ATP from ADP in the presence of a proton gradient across the membrane. The gamma chain is believed to be important in regulating ATPase activity and the flow of protons through the CF(0) complex. The protein is ATP synthase gamma chain of Burkholderia lata (strain ATCC 17760 / DSM 23089 / LMG 22485 / NCIMB 9086 / R18194 / 383).